The sequence spans 232 residues: uncharacterized protein (232 aa).

The N-terminal stretch at 1 to 18 (MGILKSLFTLGKSFISQA) is a signal peptide. A disordered region spans residues 207 to 232 (AEAGIGGSNKSSAQDVLARLQRQQGE).

The protein belongs to the PspA/Vipp/IM30 family.

This is an uncharacterized protein from Escherichia coli O6:H1 (strain CFT073 / ATCC 700928 / UPEC).